The primary structure comprises 409 residues: LL-diaminopimelate aminotransferase (409 aa).

Substrate-binding residues include tyrosine 15 and glycine 42. Pyridoxal 5'-phosphate contacts are provided by residues tyrosine 72, 108–109 (AK), tyrosine 132, asparagine 186, tyrosine 217, and 245–247 (SFS). 3 residues coordinate substrate: lysine 109, tyrosine 132, and asparagine 186. Position 248 is an N6-(pyridoxal phosphate)lysine (lysine 248). Residues arginine 256 and asparagine 291 each coordinate pyridoxal 5'-phosphate. Residues asparagine 291 and arginine 387 each coordinate substrate.

This sequence belongs to the class-I pyridoxal-phosphate-dependent aminotransferase family. LL-diaminopimelate aminotransferase subfamily. As to quaternary structure, homodimer. Pyridoxal 5'-phosphate is required as a cofactor.

The catalysed reaction is (2S,6S)-2,6-diaminopimelate + 2-oxoglutarate = (S)-2,3,4,5-tetrahydrodipicolinate + L-glutamate + H2O + H(+). It participates in amino-acid biosynthesis; L-lysine biosynthesis via DAP pathway; LL-2,6-diaminopimelate from (S)-tetrahydrodipicolinate (aminotransferase route): step 1/1. In terms of biological role, involved in the synthesis of meso-diaminopimelate (m-DAP or DL-DAP), required for both lysine and peptidoglycan biosynthesis. Catalyzes the direct conversion of tetrahydrodipicolinate to LL-diaminopimelate. This Parabacteroides distasonis (strain ATCC 8503 / DSM 20701 / CIP 104284 / JCM 5825 / NCTC 11152) protein is LL-diaminopimelate aminotransferase.